The chain runs to 64 residues: DNA gyrase inhibitor YacG (64 aa).

Cys-9, Cys-12, Cys-28, and Cys-32 together coordinate Zn(2+). The disordered stretch occupies residues 45–64; the sequence is KRIPSAGDLSDSDDWSEQQP. Positions 54-64 are enriched in acidic residues; it reads SDSDDWSEQQP.

This sequence belongs to the DNA gyrase inhibitor YacG family. In terms of assembly, interacts with GyrB. The cofactor is Zn(2+).

In terms of biological role, inhibits all the catalytic activities of DNA gyrase by preventing its interaction with DNA. Acts by binding directly to the C-terminal domain of GyrB, which probably disrupts DNA binding by the gyrase. This Klebsiella pneumoniae subsp. pneumoniae (strain ATCC 700721 / MGH 78578) protein is DNA gyrase inhibitor YacG.